We begin with the raw amino-acid sequence, 347 residues long: NADH-ubiquinone oxidoreductase chain 2 (347 aa).

A run of 10 helical transmembrane segments spans residues 3–23 (PLAL…TMMS), 25–45 (HWLT…PILM), 59–79 (YFMT…INLM), 93–115 (VASN…HFWV), 150–170 (NTNL…WGGL), 178–198 (ILAY…PFNP), 200–220 (LTLL…MILA), 240–260 (MTIM…LSGF), 274–294 (NSII…YFYM), and 326–346 (LPTL…ISML).

The protein belongs to the complex I subunit 2 family. As to quaternary structure, core subunit of respiratory chain NADH dehydrogenase (Complex I) which is composed of 45 different subunits. Interacts with TMEM242.

Its subcellular location is the mitochondrion inner membrane. The catalysed reaction is a ubiquinone + NADH + 5 H(+)(in) = a ubiquinol + NAD(+) + 4 H(+)(out). Its function is as follows. Core subunit of the mitochondrial membrane respiratory chain NADH dehydrogenase (Complex I) which catalyzes electron transfer from NADH through the respiratory chain, using ubiquinone as an electron acceptor. Essential for the catalytic activity and assembly of complex I. This is NADH-ubiquinone oxidoreductase chain 2 from Mammuthus primigenius (Siberian woolly mammoth).